Consider the following 142-residue polypeptide: Large ribosomal subunit protein uL13 (142 aa).

This sequence belongs to the universal ribosomal protein uL13 family. As to quaternary structure, part of the 50S ribosomal subunit.

Functionally, this protein is one of the early assembly proteins of the 50S ribosomal subunit, although it is not seen to bind rRNA by itself. It is important during the early stages of 50S assembly. In Chromohalobacter salexigens (strain ATCC BAA-138 / DSM 3043 / CIP 106854 / NCIMB 13768 / 1H11), this protein is Large ribosomal subunit protein uL13.